Here is a 235-residue protein sequence, read N- to C-terminus: Aspartate/glutamate leucyltransferase (235 aa).

Belongs to the R-transferase family. Bpt subfamily.

Its subcellular location is the cytoplasm. The catalysed reaction is N-terminal L-glutamyl-[protein] + L-leucyl-tRNA(Leu) = N-terminal L-leucyl-L-glutamyl-[protein] + tRNA(Leu) + H(+). The enzyme catalyses N-terminal L-aspartyl-[protein] + L-leucyl-tRNA(Leu) = N-terminal L-leucyl-L-aspartyl-[protein] + tRNA(Leu) + H(+). Functionally, functions in the N-end rule pathway of protein degradation where it conjugates Leu from its aminoacyl-tRNA to the N-termini of proteins containing an N-terminal aspartate or glutamate. The sequence is that of Aspartate/glutamate leucyltransferase from Pseudomonas fluorescens (strain Pf0-1).